The following is a 324-amino-acid chain: IDS-like terpene synthase 1 (324 aa).

The Mg(2+) site is built by D77 and D81.

This sequence belongs to the FPP/GGPP synthase family. The cofactor is Mg(2+).

The catalysed reaction is (2E)-geranyl diphosphate = (E)-beta-ocimene + diphosphate. The enzyme catalyses (2E)-geranyl diphosphate + H2O = linalool + diphosphate. It carries out the reaction (2E,6E)-farnesyl diphosphate = (3E,6E)-alpha-farnesene + diphosphate. It catalyses the reaction (2E,6E,10E)-geranylgeranyl diphosphate = (E,E,E)-alpha-springene + diphosphate. Functionally, terpene synthase that shows monoterpene synthase activity and produces (E)-beta-ocimene as a major product and linalool as a minor product, using geranyl diphosphate (GPP) as substrate. Also shows sesquiterpene synthase activity as it is able to convert farnesyl diphosphate (FPP) into (E,E)-alpha-farnesene. Finally, TPS1 can convert geranylgeranyl diphosphate into (E,E,E)-alpha-springene. This Melampsora larici-populina (strain 98AG31 / pathotype 3-4-7) (Poplar leaf rust fungus) protein is IDS-like terpene synthase 1.